A 645-amino-acid chain; its full sequence is Lipase 1 (645 aa).

The N-terminal stretch at Met1–Ala24 is a signal peptide. Catalysis depends on Ser34, which acts as the Nucleophile. Active-site residues include Asp327 and His330. The region spanning Asn383–Phe645 is the Autotransporter domain.

The protein belongs to the 'GDSL' lipolytic enzyme family.

The protein resides in the secreted. It catalyses the reaction a triacylglycerol + H2O = a diacylglycerol + a fatty acid + H(+). This is Lipase 1 (lip-1) from Photorhabdus luminescens (Xenorhabdus luminescens).